A 556-amino-acid polypeptide reads, in one-letter code: Arginine--tRNA ligase (556 aa).

The 'HIGH' region signature appears at 132–142; sequence ANPTGDLHLGH.

It belongs to the class-I aminoacyl-tRNA synthetase family. In terms of assembly, monomer.

The protein resides in the cytoplasm. The enzyme catalyses tRNA(Arg) + L-arginine + ATP = L-arginyl-tRNA(Arg) + AMP + diphosphate. This Listeria monocytogenes serovar 1/2a (strain ATCC BAA-679 / EGD-e) protein is Arginine--tRNA ligase.